Here is a 297-residue protein sequence, read N- to C-terminus: HTH-type transcriptional regulator IlvY (297 aa).

An HTH lysR-type domain is found at 1 to 58; it reads MDLRDLKTFLHLAESRHFGRSARAMHVSPSTLSRQIQRLEEDLGQPLFVRDNRTVTLT. Residues 18–37 constitute a DNA-binding region (H-T-H motif); that stretch reads FGRSARAMHVSPSTLSRQIQ.

This sequence belongs to the LysR transcriptional regulatory family.

The protein localises to the cytoplasm. Functionally, this protein activates the transcription of the ilvC gene in the presence of acetolactate or acetohydroxybutyrate. IlvY is also a negative regulator of its own expression. In Escherichia coli (strain K12), this protein is HTH-type transcriptional regulator IlvY (ilvY).